Reading from the N-terminus, the 803-residue chain is Translation initiation factor IF-2 (803 aa).

Disordered stretches follow at residues 95–125 and 138–209; these read PVVE…EKAE and EVKE…KLEQ. Residues 111–121 show a composition bias toward polar residues; sequence VPLTSDTTNLN. The segment covering 138–155 has biased composition (basic and acidic residues); it reads EVKEEAKKTPSEKKETPK. Basic residues predominate over residues 156 to 167; it reads KGPRKETRRSRK. Basic and acidic residues predominate over residues 168–188; sequence PDKEDKWEREELHMTKLVEER. Positions 302–471 constitute a tr-type G domain; it reads PRAPVVTIMG…LLQAEVLELK (170 aa). The tract at residues 311-318 is G1; the sequence is GHVDHGKT. 311–318 serves as a coordination point for GTP; it reads GHVDHGKT. Residues 336–340 form a G2 region; the sequence is GITQH. The tract at residues 357-360 is G3; that stretch reads DTPG. Residues 357 to 361 and 411 to 414 contribute to the GTP site; these read DTPGH and NKID. The G4 stretch occupies residues 411-414; it reads NKID. The interval 447 to 449 is G5; it reads SAK.

It belongs to the TRAFAC class translation factor GTPase superfamily. Classic translation factor GTPase family. IF-2 subfamily.

Its subcellular location is the cytoplasm. One of the essential components for the initiation of protein synthesis. Protects formylmethionyl-tRNA from spontaneous hydrolysis and promotes its binding to the 30S ribosomal subunits. Also involved in the hydrolysis of GTP during the formation of the 70S ribosomal complex. The chain is Translation initiation factor IF-2 from Coxiella burnetii (strain CbuG_Q212) (Coxiella burnetii (strain Q212)).